A 255-amino-acid chain; its full sequence is Protein NEN4 (255 aa).

In terms of domain architecture, Exonuclease spans 11–174; that stretch reads VFFDLETNVP…DDVRMNLEVL (164 aa). Asp14 and Glu16 together coordinate Mg(2+). The active-site Proton donor/acceptor is His161. Asp166 serves as a coordination point for Mg(2+).

It depends on Mg(2+) as a cofactor. As to expression, expressed in the sieve elements and phloem pole pericycle cells.

Its subcellular location is the nucleus. Functionally, probable exonuclease required for enuclation of sieve elements. The chain is Protein NEN4 from Arabidopsis thaliana (Mouse-ear cress).